We begin with the raw amino-acid sequence, 479 residues long: MAQTNGVLQEPAITTMNGAPVLKPASTQRIGNQLRATLLLQDINLLELIQHITHERIPERVVHARGTSAHGYFEVTDDISDVTSAAFLNRVGKQTDIFCRFSTVAGRAESAETVRDTRGFAFKMFTEEGNLDWLFLSTPVFPIRDGAKFPSFTHATKKNPRSGLPDHKAFWDYFTHNQEGIHFLMFLFSDRATPVDFQHADIFSINTYKFTKSDGSFTYVKIHLKTNQGVKNFTQDEANQKAGVDPDFQTRSLYEDIENQKYPTWDVFAQIIDPVKAENYHINIFDATKTFPFSEFPLRKFGKITLNRNVDNFFAEQEQSAFSPTNLVPGWALTPDPIIQTRALAYADTQRYRLGANFVQLPVNAPYKKPFTPLIRDGAATVNGNLGGTPNYFPSSFYNVGAATQYAQPDEEQFQGTVVNFESEVVDADYVQPRIFWEKTLAEEPGQQDNLISNVAGHLSAVTGDKGLGSSTSGLCNVR.

Residue histidine 63 is part of the active site. Tyrosine 346 lines the heme pocket.

It belongs to the catalase family. Heme is required as a cofactor.

Its subcellular location is the peroxisome matrix. The enzyme catalyses 2 H2O2 = O2 + 2 H2O. In terms of biological role, catalyzes the degradation of hydrogen peroxide (H(2)O(2)) generated by peroxisomal oxidases to water and oxygen, thereby protecting cells from the toxic effects of hydrogen peroxide. In Botryotinia fuckeliana (Noble rot fungus), this protein is Catalase A (catA).